Reading from the N-terminus, the 360-residue chain is NAD(P)H-quinone oxidoreductase subunit 1, chloroplastic (360 aa).

The next 8 helical transmembrane spans lie at 29–49 (WIPL…LVIV), 96–116 (IWLF…AYLV), 128–148 (ISLG…GLLM), 166–186 (AAQA…ICLL), 204–224 (ILGW…IAAL), 255–277 (GLFY…ILYL), 297–317 (IFAA…FIFL), and 333–353 (LLDL…LLTA).

This sequence belongs to the complex I subunit 1 family. In terms of assembly, NDH is composed of at least 16 different subunits, 5 of which are encoded in the nucleus.

It localises to the plastid. It is found in the chloroplast thylakoid membrane. The enzyme catalyses a plastoquinone + NADH + (n+1) H(+)(in) = a plastoquinol + NAD(+) + n H(+)(out). The catalysed reaction is a plastoquinone + NADPH + (n+1) H(+)(in) = a plastoquinol + NADP(+) + n H(+)(out). NDH shuttles electrons from NAD(P)H:plastoquinone, via FMN and iron-sulfur (Fe-S) centers, to quinones in the photosynthetic chain and possibly in a chloroplast respiratory chain. The immediate electron acceptor for the enzyme in this species is believed to be plastoquinone. Couples the redox reaction to proton translocation, and thus conserves the redox energy in a proton gradient. This Chlorokybus atmophyticus (Soil alga) protein is NAD(P)H-quinone oxidoreductase subunit 1, chloroplastic.